Consider the following 236-residue polypeptide: UPF0257 lipoprotein YnfC (236 aa).

The N-terminal stretch at 1–16 (MKKPLLLTLLCMILAG) is a signal peptide. Residue Cys-17 is the site of N-palmitoyl cysteine attachment. Cys-17 carries S-diacylglycerol cysteine lipidation.

It belongs to the UPF0257 family.

It is found in the cell membrane. This Salmonella typhi protein is UPF0257 lipoprotein YnfC.